The primary structure comprises 649 residues: ENTH domain-containing protein C19F8.03c (649 aa).

Residues 2–136 enclose the ENTH domain; sequence SPSKWLLTYE…VDYAQVGDAP (135 aa). Disordered regions lie at residues 280–382, 409–440, and 590–649; these read YLQN…NELE, LSAE…PNDS, and FTHG…PFRS. Ser-285 and Ser-287 each carry phosphoserine. Basic residues predominate over residues 299-308; it reads PTLRKKKSIP. 2 stretches are compositionally biased toward polar residues: residues 313–326 and 340–349; these read ESSS…TVQQ and PETQRTTSRI. Acidic residues predominate over residues 352–381; the sequence is QEEEIKEEEMEGEEEEEEEEVPNYESENEL. 3 stretches are compositionally biased toward polar residues: residues 409-418, 614-624, and 635-649; these read LSAEGTSASP, TPYTASKNPFS, and ARNS…PFRS. Thr-414 is modified (phosphothreonine). Position 417 is a phosphoserine (Ser-417).

The protein resides in the cytoplasm. This is ENTH domain-containing protein C19F8.03c from Schizosaccharomyces pombe (strain 972 / ATCC 24843) (Fission yeast).